The sequence spans 85 residues: UPF0335 protein BARBAKC583_0130 (85 aa).

Belongs to the UPF0335 family.

The sequence is that of UPF0335 protein BARBAKC583_0130 from Bartonella bacilliformis (strain ATCC 35685 / KC583 / Herrer 020/F12,63).